A 230-amino-acid polypeptide reads, in one-letter code: Probable carboxylesterase Culp2 (230 aa).

Residues 1–32 (MNDLLTRRLLTMGAAAAMLAAVLLLTPITVPA) constitute a signal peptide (tat-type signal). Residues Cys45 and Cys112 are joined by a disulfide bond. Catalysis depends on Ser123, which acts as the Nucleophile. Cys185 and Cys192 are disulfide-bonded. The active site involves Asp189. Catalysis depends on His207, which acts as the Proton donor/acceptor.

The protein belongs to the cutinase family. Post-translationally, predicted to be exported by the Tat system. The position of the signal peptide cleavage has not been experimentally proven.

The protein resides in the secreted. The protein localises to the cell surface. This Mycobacterium bovis (strain ATCC BAA-935 / AF2122/97) protein is Probable carboxylesterase Culp2 (cut2).